Consider the following 96-residue polypeptide: Co-chaperonin GroES (96 aa).

This sequence belongs to the GroES chaperonin family. In terms of assembly, heptamer of 7 subunits arranged in a ring. Interacts with the chaperonin GroEL.

It is found in the cytoplasm. Functionally, together with the chaperonin GroEL, plays an essential role in assisting protein folding. The GroEL-GroES system forms a nano-cage that allows encapsulation of the non-native substrate proteins and provides a physical environment optimized to promote and accelerate protein folding. GroES binds to the apical surface of the GroEL ring, thereby capping the opening of the GroEL channel. The sequence is that of Co-chaperonin GroES from Aggregatibacter actinomycetemcomitans (Actinobacillus actinomycetemcomitans).